Here is an 87-residue protein sequence, read N- to C-terminus: Protein anon-73B1 (87 aa).

A helical transmembrane segment spans residues 25–47 (LLIRYGLYVGALFQFVCISAAVL). Positions 51–87 (NPDGQSNPESGEVTEREGEPVRTRLHKIRKLEKKKRR) are disordered. Residues 63–72 (VTEREGEPVR) are compositionally biased toward basic and acidic residues. Over residues 73–87 (TRLHKIRKLEKKKRR) the composition is skewed to basic residues.

This sequence belongs to the UPF0239 family.

The protein localises to the membrane. This chain is Protein anon-73B1 (anon-73B1), found in Drosophila melanogaster (Fruit fly).